A 468-amino-acid polypeptide reads, in one-letter code: Siroheme synthase (468 aa).

The segment at 1–203 (MQYLPIFLNI…GQEEEAEGAL (203 aa)) is precorrin-2 dehydrogenase /sirohydrochlorin ferrochelatase. NAD(+) is bound by residues 22–23 (TV) and 43–44 (PK). Residue serine 128 is modified to Phosphoserine. The uroporphyrinogen-III C-methyltransferase stretch occupies residues 216–468 (GEVYLVGAGP…VPDREPLDAR (253 aa)). Residue proline 225 participates in S-adenosyl-L-methionine binding. Aspartate 248 serves as the catalytic Proton acceptor. The active-site Proton donor is the lysine 270. S-adenosyl-L-methionine contacts are provided by residues 301–303 (GGD), isoleucine 306, 331–332 (TA), methionine 383, and glycine 412.

The protein in the N-terminal section; belongs to the precorrin-2 dehydrogenase / sirohydrochlorin ferrochelatase family. This sequence in the C-terminal section; belongs to the precorrin methyltransferase family.

It catalyses the reaction uroporphyrinogen III + 2 S-adenosyl-L-methionine = precorrin-2 + 2 S-adenosyl-L-homocysteine + H(+). The catalysed reaction is precorrin-2 + NAD(+) = sirohydrochlorin + NADH + 2 H(+). It carries out the reaction siroheme + 2 H(+) = sirohydrochlorin + Fe(2+). It participates in cofactor biosynthesis; adenosylcobalamin biosynthesis; precorrin-2 from uroporphyrinogen III: step 1/1. The protein operates within cofactor biosynthesis; adenosylcobalamin biosynthesis; sirohydrochlorin from precorrin-2: step 1/1. Its pathway is porphyrin-containing compound metabolism; siroheme biosynthesis; precorrin-2 from uroporphyrinogen III: step 1/1. It functions in the pathway porphyrin-containing compound metabolism; siroheme biosynthesis; siroheme from sirohydrochlorin: step 1/1. It participates in porphyrin-containing compound metabolism; siroheme biosynthesis; sirohydrochlorin from precorrin-2: step 1/1. Functionally, multifunctional enzyme that catalyzes the SAM-dependent methylations of uroporphyrinogen III at position C-2 and C-7 to form precorrin-2 via precorrin-1. Then it catalyzes the NAD-dependent ring dehydrogenation of precorrin-2 to yield sirohydrochlorin. Finally, it catalyzes the ferrochelation of sirohydrochlorin to yield siroheme. The polypeptide is Siroheme synthase (Nitrosococcus oceani (strain ATCC 19707 / BCRC 17464 / JCM 30415 / NCIMB 11848 / C-107)).